An 882-amino-acid polypeptide reads, in one-letter code: DNA mismatch repair protein MutS (882 aa).

Position 627–634 (627–634) interacts with ATP; sequence GPNMAGKS.

This sequence belongs to the DNA mismatch repair MutS family.

In terms of biological role, this protein is involved in the repair of mismatches in DNA. It is possible that it carries out the mismatch recognition step. This protein has a weak ATPase activity. The protein is DNA mismatch repair protein MutS of Anaeromyxobacter sp. (strain K).